Reading from the N-terminus, the 427-residue chain is 12-alpha,13-alpha-dihydroxyfumitremorgin C prenyltransferase (427 aa).

Residue glutamate 94 coordinates substrate. Dimethylallyl diphosphate-binding residues include arginine 105, lysine 192, tyrosine 194, tyrosine 268, glutamine 353, tyrosine 355, tyrosine 419, and tyrosine 423.

It belongs to the tryptophan dimethylallyltransferase family.

The catalysed reaction is 12alpha,13alpha-dihydroxyfumitremorgin C + dimethylallyl diphosphate = fumitremorgin B + diphosphate. The protein operates within mycotoxin biosynthesis. 12-alpha,13-alpha-dihydroxyfumitremorgin C prenyltransferase; part of the gene cluster that mediates the biosynthesis of fumitremorgins, indole alkaloids that carry not only intriguing chemical structures, but also interesting biological and pharmacological activities. The biosynthesis of fumitremorgin-type alkaloids begins by condensation of the two amino acids L-tryptophan and L-proline to brevianamide F, catalyzed by the non-ribosomal peptide synthetase ftmA. Brevianamide F is then prenylated by the prenyltransferase ftmPT1/ftmB in the presence of dimethylallyl diphosphate, resulting in the formation of tryprostatin B. The three cytochrome P450 monooxygenases, ftmP450-1/ftmC, ftmP450-2/ftmE and ftmP450-3/FtmG, are responsible for the conversion of tryprostatin B to 6-hydroxytryprostatin B, tryprostatin A to fumitremorgin C and fumitremorgin C to 12,13-dihydroxyfumitremorgin C, respectively. The putative methyltransferase ftmMT/ftmD is expected for the conversion of 6-hydroxytryprostatin B to tryprostatin A. FtmPT2/FtmH catalyzes the prenylation of 12,13-dihydroxyfumitre-morgin C in the presence of dimethylallyl diphosphate, resulting in the formation of fumitremorgin B. Fumitremorgin B is further converted to verruculogen by ftmOx1/ftmF via the insertion of an endoperoxide bond between the two prenyl moieties. In some fungal species, verruculogen is further converted to fumitremorgin A, but the enzymes involved in this step have not been identified yet. This is 12-alpha,13-alpha-dihydroxyfumitremorgin C prenyltransferase from Aspergillus fumigatus (Neosartorya fumigata).